Here is a 367-residue protein sequence, read N- to C-terminus: ELAV-like protein 3 (367 aa).

3 RRM domains span residues 39-117 (TNLI…YARP), 125-205 (ANLY…FANN), and 284-362 (WCIF…FKTS).

Belongs to the RRM elav family. In terms of assembly, interacts with MAP1B light chain LC1. Brain specific.

RNA-binding protein that binds to AU-rich element (ARE) sequences of target mRNAs, including VEGF mRNA. May also bind poly-A tracts via RRM 3. May be involved in neuronal differentiation and maintenance. Plays a role in the stabilization of GAP43 mRNA and in spatial learning. The polypeptide is ELAV-like protein 3 (ELAVL3) (Homo sapiens (Human)).